The primary structure comprises 174 residues: Large ribosomal subunit protein uL13 (174 aa).

2 disordered regions span residues 1 to 22 and 153 to 174; these read MAFP…AKSP and GETH…LEVK.

This sequence belongs to the universal ribosomal protein uL13 family. Part of the 50S ribosomal subunit. Contacts proteins L3 and L20.

In terms of biological role, this protein is one of the early assembly proteins of the 50S ribosomal subunit. Binds to the 23S rRNA. The protein is Large ribosomal subunit protein uL13 (rplM) of Deinococcus radiodurans (strain ATCC 13939 / DSM 20539 / JCM 16871 / CCUG 27074 / LMG 4051 / NBRC 15346 / NCIMB 9279 / VKM B-1422 / R1).